A 439-amino-acid chain; its full sequence is Mitochondrial distribution and morphology protein 12 (439 aa).

An SMP-LTD domain is found at 1–439; it reads MSIDVNWRFA…VYPSFWTFLI (439 aa). 3 disordered regions span residues 70-103, 185-274, and 354-386; these read YEED…LNEP, GWSD…PPRM, and PEQQ…RHGG. A compositionally biased stretch (basic and acidic residues) spans 78–91; sequence TSDASEERGEEHSS. The segment covering 215–245 has biased composition (polar residues); sequence DTSNSTSRPSTANTLPSHPSGSSKNSGQAAT. 2 stretches are compositionally biased toward basic and acidic residues: residues 247-261 and 362-371; these read RNDH…HLED and SAGDDHRPQS.

This sequence belongs to the MDM12 family. In terms of assembly, component of the ER-mitochondria encounter structure (ERMES) or MDM complex, composed of mmm1, mdm10, mdm12 and mdm34. A mmm1 homodimer associates with one molecule of mdm12 on each side in a pairwise head-to-tail manner, and the SMP-LTD domains of mmm1 and mdm12 generate a continuous hydrophobic tunnel for phospholipid trafficking.

The protein localises to the mitochondrion outer membrane. Its subcellular location is the endoplasmic reticulum membrane. In terms of biological role, component of the ERMES/MDM complex, which serves as a molecular tether to connect the endoplasmic reticulum (ER) and mitochondria. Components of this complex are involved in the control of mitochondrial shape and protein biogenesis, and function in nonvesicular lipid trafficking between the ER and mitochondria. Mdm12 is required for the interaction of the ER-resident membrane protein mmm1 and the outer mitochondrial membrane-resident beta-barrel protein mdm10. The mdm12-mmm1 subcomplex functions in the major beta-barrel assembly pathway that is responsible for biogenesis of all mitochondrial outer membrane beta-barrel proteins, and acts in a late step after the SAM complex. The mdm10-mdm12-mmm1 subcomplex further acts in the TOM40-specific pathway after the action of the mdm12-mmm1 complex. Essential for establishing and maintaining the structure of mitochondria and maintenance of mtDNA nucleoids. This Aspergillus fumigatus (strain CBS 144.89 / FGSC A1163 / CEA10) (Neosartorya fumigata) protein is Mitochondrial distribution and morphology protein 12.